Consider the following 136-residue polypeptide: Ribonuclease P protein component (136 aa).

It belongs to the RnpA family. In terms of assembly, consists of a catalytic RNA component (M1 or rnpB) and a protein subunit.

The enzyme catalyses Endonucleolytic cleavage of RNA, removing 5'-extranucleotides from tRNA precursor.. Its function is as follows. RNaseP catalyzes the removal of the 5'-leader sequence from pre-tRNA to produce the mature 5'-terminus. It can also cleave other RNA substrates such as 4.5S RNA. The protein component plays an auxiliary but essential role in vivo by binding to the 5'-leader sequence and broadening the substrate specificity of the ribozyme. This chain is Ribonuclease P protein component, found in Burkholderia pseudomallei (strain 1106a).